Consider the following 46-residue polypeptide: Large ribosomal subunit protein bL36 (46 aa).

Belongs to the bacterial ribosomal protein bL36 family.

In Escherichia coli O7:K1 (strain IAI39 / ExPEC), this protein is Large ribosomal subunit protein bL36.